Consider the following 224-residue polypeptide: 7-cyano-7-deazaguanine synthase 1 (224 aa).

10 to 20 contributes to the ATP binding site; the sequence is LSGGLDSMVCA. The Zn(2+) site is built by Cys-189, Cys-199, Cys-202, and Cys-205.

It belongs to the QueC family. The cofactor is Zn(2+).

It catalyses the reaction 7-carboxy-7-deazaguanine + NH4(+) + ATP = 7-cyano-7-deazaguanine + ADP + phosphate + H2O + H(+). The protein operates within purine metabolism; 7-cyano-7-deazaguanine biosynthesis. Catalyzes the ATP-dependent conversion of 7-carboxy-7-deazaguanine (CDG) to 7-cyano-7-deazaguanine (preQ(0)). The polypeptide is 7-cyano-7-deazaguanine synthase 1 (Sphingopyxis alaskensis (strain DSM 13593 / LMG 18877 / RB2256) (Sphingomonas alaskensis)).